The following is a 304-amino-acid chain: Secreted mono- and diacylglycerol lipase MDL4 (304 aa).

The N-terminal stretch at 1-19 (MRFGGVVSLVLGFIVSVLA) is a signal peptide. Cys-55 and Cys-297 form a disulfide bridge. N-linked (GlcNAc...) asparagine glycans are attached at residues Asn-102 and Asn-161. The active-site Nucleophile is the Ser-171. The active site involves Asp-228. A glycan (N-linked (GlcNAc...) asparagine) is linked at Asn-253. His-281 is an active-site residue.

It belongs to the AB hydrolase superfamily. Lipase family. Class 3 subfamily.

It localises to the secreted. It is found in the cell wall. It carries out the reaction a monoacylglycerol + H2O = glycerol + a fatty acid + H(+). It catalyses the reaction a diacylglycerol + H2O = a monoacylglycerol + a fatty acid + H(+). In terms of biological role, secreted lipase involved in Dandruff and seborrheic dermatitis (D/SD) probably via lipase-mediated breakdown of sebaceous lipids and release of irritating free fatty acids. Shows activity against monoglyceride and diglyceride substrates, but not triglyceride substrates and does not exhibit regio-selective production of diacylglycerols. Cleaves oleic acid from 1,2 isomers of diolein on both the 1 and the 2 position of the glycerol backbone, resulting mainly in free fatty acids but no monoolein is detected. Shows activity on monoolein and liberates mostly free fatty acids, but can also perform the reverse reaction and produce diolein. The chain is Secreted mono- and diacylglycerol lipase MDL4 from Malassezia globosa (strain ATCC MYA-4612 / CBS 7966) (Dandruff-associated fungus).